The sequence spans 325 residues: MKTPVHVAVTGAAGQIAYSLLFRIAVGDLFGPHQPVILKLLDVPSAERVLEGVAMELDDCASPLLQEIEVSSDPAEVFDGAEAVFMLGATPRGPGMERRDLLQVNADIFSAQGRALNESASRRVKILVVGNPANTNALIAQRNAPDLAPGCFSAMTRLDHNRATSLLARHCGCNVAEISRVVIWGNHSPTQYPDLHHARVKGKPALSLVDPAWYVETFIPTVQQRGASVIAIRGKSSAASAANAALDHMRSWFLGTPKDDWVSMTVSSDGSYGIAEGLMFSFPVTIENGRFRIVQDLPLDTFSRERLRLTEVELLEERAMVSHLL.

NAD(+) is bound at residue 11–17 (GAAGQIA). The substrate site is built by Arg-92 and Arg-98. NAD(+) is bound by residues Asn-105, Gln-112, and 129–131 (VGN). 2 residues coordinate substrate: Asn-131 and Arg-162. The Proton acceptor role is filled by His-187.

This sequence belongs to the LDH/MDH superfamily. MDH type 2 family.

The enzyme catalyses (S)-malate + NAD(+) = oxaloacetate + NADH + H(+). Its function is as follows. Catalyzes the reversible oxidation of malate to oxaloacetate. This Methylococcus capsulatus (strain ATCC 33009 / NCIMB 11132 / Bath) protein is Malate dehydrogenase.